The sequence spans 459 residues: Diaminopimelate decarboxylase (459 aa).

Lys89 is modified (N6-(pyridoxal phosphate)lysine). Residues Gly271 and 313–316 (EPGR) each bind pyridoxal 5'-phosphate. Substrate contacts are provided by Arg316, Arg357, and Tyr361. The active-site Proton donor is Cys388. Substrate-binding residues include Glu389 and Tyr418. Residue Tyr418 participates in pyridoxal 5'-phosphate binding.

It belongs to the Orn/Lys/Arg decarboxylase class-II family. LysA subfamily. Homodimer. The cofactor is pyridoxal 5'-phosphate.

The catalysed reaction is meso-2,6-diaminopimelate + H(+) = L-lysine + CO2. Its pathway is amino-acid biosynthesis; L-lysine biosynthesis via DAP pathway; L-lysine from DL-2,6-diaminopimelate: step 1/1. Functionally, specifically catalyzes the decarboxylation of meso-diaminopimelate (meso-DAP) to L-lysine. The protein is Diaminopimelate decarboxylase of Corynebacterium efficiens (strain DSM 44549 / YS-314 / AJ 12310 / JCM 11189 / NBRC 100395).